Here is a 680-residue protein sequence, read N- to C-terminus: Oligopeptidase A (680 aa).

Histidine 469 lines the Zn(2+) pocket. The active site involves glutamate 470. Residues histidine 473 and histidine 476 each contribute to the Zn(2+) site.

It belongs to the peptidase M3 family. Zn(2+) is required as a cofactor.

The catalysed reaction is Hydrolysis of oligopeptides, with broad specificity. Gly or Ala commonly occur as P1 or P1' residues, but more distant residues are also important, as is shown by the fact that Z-Gly-Pro-Gly-|-Gly-Pro-Ala is cleaved, but not Z-(Gly)(5).. In terms of biological role, may play a specific role in the degradation of signal peptides after they are released from precursor forms of secreted proteins. Can cleave N-acetyl-L-Ala(4). In Escherichia coli (strain K12), this protein is Oligopeptidase A (prlC).